Reading from the N-terminus, the 264-residue chain is Small ribosomal subunit protein uS2 (264 aa).

Residues 225–264 (GKKAREERQLAAAKDAAGDAKPEAEEAPVAAEAEEAPAAE) form a disordered region.

It belongs to the universal ribosomal protein uS2 family.

This chain is Small ribosomal subunit protein uS2, found in Corynebacterium glutamicum (strain R).